The sequence spans 74 residues: Protein SlyX homolog (74 aa).

Belongs to the SlyX family.

The polypeptide is Protein SlyX homolog (Neisseria meningitidis serogroup C / serotype 2a (strain ATCC 700532 / DSM 15464 / FAM18)).